A 280-amino-acid chain; its full sequence is MNIKAYAKINISLDVIGKREDGYHLLKMIMQNIDLYDIVQVEKIPNGIKLKCNKPYVPTDERNLAYKAAKLFKETYDIKSGIYINIEKNIPVSAGLAGGSTDAAAVLKIMNKMFNINVPQSELMDLGLKLGADVPYCICGGTALCEGIGEKVTKLKPFTDKILVVVKPPFGVSTKEVYKAFDLSKVIFHPKTNELISNIEKNNIDFIANNMKNLLENVTLGRYKIISTIKEEINTCGALGSMMSGSGPTVFGFFDDILKAQKCYEKMKEKYVDVFITRTI.

The active site involves Lys8. ATP is bound at residue 91–101 (PVSAGLAGGST). Asp133 is a catalytic residue.

Belongs to the GHMP kinase family. IspE subfamily.

It carries out the reaction 4-CDP-2-C-methyl-D-erythritol + ATP = 4-CDP-2-C-methyl-D-erythritol 2-phosphate + ADP + H(+). It functions in the pathway isoprenoid biosynthesis; isopentenyl diphosphate biosynthesis via DXP pathway; isopentenyl diphosphate from 1-deoxy-D-xylulose 5-phosphate: step 3/6. Catalyzes the phosphorylation of the position 2 hydroxy group of 4-diphosphocytidyl-2C-methyl-D-erythritol. This Clostridium botulinum (strain Eklund 17B / Type B) protein is 4-diphosphocytidyl-2-C-methyl-D-erythritol kinase.